Consider the following 479-residue polypeptide: Poly(A) polymerase catalytic subunit (479 aa).

Catalysis depends on residues Asp-202 and Asp-204. Ca(2+) is bound by residues Asp-202, Asp-204, and Asp-253.

It belongs to the poxviridae poly(A) polymerase catalytic subunit family. As to quaternary structure, heterodimer of a large (catalytic) subunit and a small (regulatory) subunit.

The enzyme catalyses RNA(n) + ATP = RNA(n)-3'-adenine ribonucleotide + diphosphate. Polymerase that creates the 3'-poly(A) tail of mRNA's. The protein is Poly(A) polymerase catalytic subunit (OPG063) of Bos taurus (Bovine).